Reading from the N-terminus, the 1450-residue chain is Protein TIC 214 (1450 aa).

The next 6 helical transmembrane spans lie at 29–49 (FGLY…IVVI), 61–81 (VMAF…IYYT), 86–106 (LFIK…FYWQ), 132–152 (FFDS…PIFF), 166–186 (LNFF…FFNA), and 213–233 (IIPI…HIPF).

This sequence belongs to the TIC214 family. As to quaternary structure, part of the Tic complex.

It is found in the plastid. The protein localises to the chloroplast inner membrane. In terms of biological role, involved in protein precursor import into chloroplasts. May be part of an intermediate translocation complex acting as a protein-conducting channel at the inner envelope. This Chaetosphaeridium globosum (Charophycean green alga) protein is Protein TIC 214.